The following is a 1037-amino-acid chain: Mediator of RNA polymerase II transcription subunit 14 (1037 aa).

The protein belongs to the Mediator complex subunit 14 family. Component of the Mediator complex.

The protein resides in the nucleus. Functionally, component of the Mediator complex, a coactivator involved in the regulated transcription of nearly all RNA polymerase II-dependent genes. Mediator functions as a bridge to convey information from gene-specific regulatory proteins to the basal RNA polymerase II transcription machinery. Mediator is recruited to promoters by direct interactions with regulatory proteins and serves as a scaffold for the assembly of a functional preinitiation complex with RNA polymerase II and the general transcription factors. In Candida glabrata (strain ATCC 2001 / BCRC 20586 / JCM 3761 / NBRC 0622 / NRRL Y-65 / CBS 138) (Yeast), this protein is Mediator of RNA polymerase II transcription subunit 14 (RGR1).